A 628-amino-acid polypeptide reads, in one-letter code: Kelch-like protein diablo (628 aa).

Residues 1-56 (MGDLPGSTGGGSGPAAAGNASGNSSSAGNTGLGVAGTTGVDRPPSPARLSHTSEKH) form a disordered region. Residues 14–29 (PAAAGNASGNSSSAGN) show a composition bias toward low complexity. The 68-residue stretch at 74-141 (CDVVLNVGGR…CYTAHIIVEE (68 aa)) folds into the BTB domain. The region spanning 176 to 278 (CLGIRAFADT…SPKFLVGTVG (103 aa)) is the BACK domain. Kelch repeat units lie at residues 325-371 (VLFA…VLND), 373-419 (LYAV…VLDG), 420-466 (FLYA…VLGG), 468-513 (LYAI…VFNN), 515-560 (IYAV…VVNG), and 561-607 (QLYA…VMRA).

It participates in protein modification; protein ubiquitination. Functionally, probable substrate-specific adapter of an E3 ubiquitin-protein ligase complex which mediates the ubiquitination and subsequent proteasomal degradation of target proteins. May have a role in synapse differentiation and growth. The chain is Kelch-like protein diablo from Drosophila persimilis (Fruit fly).